The following is a 491-amino-acid chain: MNANELTIAEARDALARGELSAVDLTMACLTAIDAGTPLNAFVHTTPEIALDQARAADARRGAGAGALNGIPLGIKDLFCTRGVASQAASNILRGFKPEYESTVTSKLFEAGAVMLGKLNMDEFAMGSSNETSCYGDAVNPWKVDDRRLTPGGSSGGSAAAVAADLCLAATGTDTGGSIRQPAAFTGIVGIKPTYGRVSRWGIVAFASSLDQAGPMTKSVRDAAILLGAMAGHDPKDSTSADIPVPDFEAALTGDIRGRKIGIPREYRMEGMPAEIEALWARGREMLADAGAEIVDISLPHTKYALPAYYVIAPAEASSNLARYDGVRYGHRARLGQGDGIVDMYEKTRAEGFGKEVQRRVMIGTYVLSAGFYDAYYNRARKVRALIKRDFDEAFAAGVDAILTPATPSSAFGLGEMADADPVAMYLNDVFTVTVNLAGLPGISVPVGLDAKGLPLGLQLIGRPWDEAGLLNHAHVLERAAGFVEKPRKWW.

Catalysis depends on charge relay system residues lysine 76 and serine 154. Serine 178 acts as the Acyl-ester intermediate in catalysis.

The protein belongs to the amidase family. GatA subfamily. As to quaternary structure, heterotrimer of A, B and C subunits.

The enzyme catalyses L-glutamyl-tRNA(Gln) + L-glutamine + ATP + H2O = L-glutaminyl-tRNA(Gln) + L-glutamate + ADP + phosphate + H(+). Its function is as follows. Allows the formation of correctly charged Gln-tRNA(Gln) through the transamidation of misacylated Glu-tRNA(Gln) in organisms which lack glutaminyl-tRNA synthetase. The reaction takes place in the presence of glutamine and ATP through an activated gamma-phospho-Glu-tRNA(Gln). This chain is Glutamyl-tRNA(Gln) amidotransferase subunit A, found in Cereibacter sphaeroides (strain ATCC 17029 / ATH 2.4.9) (Rhodobacter sphaeroides).